Here is a 472-residue protein sequence, read N- to C-terminus: MTGTPDVFPPATPGGAPLVALPAGPRKPDQVKGKLYIKTHGCQMNEYDSAKMADVLAASDGLELTDTPEDADVILVNTCSIREKAQEKVFSQLGVWKGLKNKGREVIIGVGGCVASQEGEAIIKRAPFVDLVFGPQTLHRLPELIRARREQKRPQVDISFPEIEKFDRLPEPRAEGASAFVSIMEGCSKYCSFCVVPYTRGTEVSRPFEDVVVEVAQLAAQGVREINLLGQNVNAYRGPYGDGEFADLGLLIRTIAEIDGVGRIRFTTSHPLEFSDSLIDAFRDVPQLANFLHLPVQAGSDRVLSAMKRGYTALEFKSKIRKLRAVRPDISISSDFIVGFPGETDADFEKTMKLIEDIGFDHSFSFIYSRRPGTPAADLEDTISDAEKHARLSRLQERINAHAAGISEKMVGTVQTVLVEGPSRKNPNELTGKTENMRSVNFPAPARLIGQFVDVVITEALTNSLRARVVAE.

A disordered region spans residues 1–24 (MTGTPDVFPPATPGGAPLVALPAG). The MTTase N-terminal domain occupies 33 to 150 (GKLYIKTHGC…LPELIRARRE (118 aa)). [4Fe-4S] cluster contacts are provided by Cys42, Cys79, Cys113, Cys187, Cys191, and Cys194. The region spanning 173 to 407 (RAEGASAFVS…RINAHAAGIS (235 aa)) is the Radical SAM core domain. One can recognise a TRAM domain in the interval 408–471 (EKMVGTVQTV…TNSLRARVVA (64 aa)).

The protein belongs to the methylthiotransferase family. MiaB subfamily. Monomer. Requires [4Fe-4S] cluster as cofactor.

The protein resides in the cytoplasm. It carries out the reaction N(6)-dimethylallyladenosine(37) in tRNA + (sulfur carrier)-SH + AH2 + 2 S-adenosyl-L-methionine = 2-methylsulfanyl-N(6)-dimethylallyladenosine(37) in tRNA + (sulfur carrier)-H + 5'-deoxyadenosine + L-methionine + A + S-adenosyl-L-homocysteine + 2 H(+). In terms of biological role, catalyzes the methylthiolation of N6-(dimethylallyl)adenosine (i(6)A), leading to the formation of 2-methylthio-N6-(dimethylallyl)adenosine (ms(2)i(6)A) at position 37 in tRNAs that read codons beginning with uridine. The polypeptide is tRNA-2-methylthio-N(6)-dimethylallyladenosine synthase (Stenotrophomonas maltophilia (strain K279a)).